The primary structure comprises 615 residues: 70 kDa neurofilament protein (615 aa).

Positions 1-31 (MSVTQKKTEISTTTTYEGESRPSSGMSGFSY) are disordered. A head region spans residues 1 to 99 (MSVTQKKTEI…KANREREKQD (99 aa)). The segment covering 21–30 (RPSSGMSGFS) has biased composition (polar residues). Positions 96–449 (EKQDMRDLNE…KLLEGEESRV (354 aa)) constitute an IF rod domain. The segment at 100 to 135 (MRDLNERFANYIEKVRFLEAQNKKLAGELEELKSKW) is coil 1A. The linker 1 stretch occupies residues 136–145 (GKETSAIKEM). The segment at 146–284 (YETELEEARK…VHAQELKELA (139 aa)) is coil 1B. The tract at residues 285-303 (ALAYRDTTAENREFWRNEL) is linker 12. The interval 304–449 (AQAIRDIQQE…KLLEGEESRV (146 aa)) is coil 2. Residues 450–615 (GMKQIVEQVV…ANYTQNTVYQ (166 aa)) are tail. Residues 499–612 (AKTTYQRTSK…EDKANYTQNT (114 aa)) form the LTD domain.

The protein belongs to the intermediate filament family.

This chain is 70 kDa neurofilament protein, found in Doryteuthis pealeii (Longfin inshore squid).